Reading from the N-terminus, the 256-residue chain is Omega-amidase YafV (256 aa).

One can recognise a CN hydrolase domain in the interval 4 to 234 (LKLTLLQQPL…AAQLDAELSL (231 aa)). Catalysis depends on E42, which acts as the Proton acceptor. The active site involves K107. The active-site Nucleophile is the C141.

The protein belongs to the carbon-nitrogen hydrolase superfamily. NIT1/NIT2 family.

It catalyses the reaction a monoamide of a dicarboxylate + H2O = a dicarboxylate + NH4(+). Functionally, hydrolyzes alpha-ketoglutaramate (a-KGM) to alpha-ketoglutarate (alpha-KG) and ammonia (specific activity 21 umol/min/mg), has very weak activity on L-glutamine, and no activity on deaminated glutathione (dGSH) or glutathione. May function as a metabolite repair enzyme. The protein is Omega-amidase YafV of Yersinia enterocolitica.